The following is a 207-amino-acid chain: High frequency lysogenization protein HflD homolog (207 aa).

The protein belongs to the HflD family.

Its subcellular location is the cytoplasm. The protein resides in the cell inner membrane. This Tolumonas auensis (strain DSM 9187 / NBRC 110442 / TA 4) protein is High frequency lysogenization protein HflD homolog.